The following is a 534-amino-acid chain: MFGTLGAGLSNFPWLSASILFPIGSALVIPFFPDKGDGKEVRWFALSIALITFLITVGSYINGFDINNENVQLKENISWLPDLGLTWSVGADGMSMPLILLTSFITALAVLAAWPVKFKPKLFFFLILVMDGGQIAVFAVQDMLLFFLTWELELIPVYLLLAIWGGKNRQYAATKFIIYTAGSSIFILLAALAMGFYGTEIPNFEFSHLAAQDFSQKFQILCYVGLLIAFGVKLPIVPLHTWLPDAHGEATAPVHMLLAGILLKMGGYALLRFNAQLLPVAHAQFAPLLIVLGVVNIIYAALTSFAQRNLKRKIAYSSISHMGFVLIGIGSFSSLGTSGAMLQMVSHGLIGASLFFLVGATYDRTKTLKLDEMSGVGQKMRIMFALWTACSLASLALPGMSGFVSELMVFTGFVTDEVYTLPFRVVMASLAAIGVILTPIYLLSMLREIFFGKENPKLIEERKLIDAEPREVYIIACLLLPIIGIGLYPRLVTESYIASINNLVDRDLTAVKSAVKTNIFSGTKKNEILKAPTI.

A run of 14 helical transmembrane segments spans residues 12 to 32 (FPWL…IPFF), 44 to 64 (FALS…INGF), 96 to 116 (MPLI…AWPV), 120 to 140 (PKLF…VFAV), 144 to 164 (LLFF…LAIW), 176 to 196 (FIIY…AMGF), 220 to 240 (ILCY…VPLH), 251 to 271 (TAPV…YALL), 285 to 305 (FAPL…LTSF), 314 to 334 (IAYS…SFSS), 340 to 360 (AMLQ…LVGA), 384 to 404 (FALW…SGFV), 425 to 445 (VVMA…LLSM), and 472 to 492 (VYII…PRLV).

This sequence belongs to the complex I subunit 4 family.

The protein localises to the cellular thylakoid membrane. It carries out the reaction a plastoquinone + NADH + (n+1) H(+)(in) = a plastoquinol + NAD(+) + n H(+)(out). The catalysed reaction is a plastoquinone + NADPH + (n+1) H(+)(in) = a plastoquinol + NADP(+) + n H(+)(out). In terms of biological role, NDH-1 shuttles electrons from NAD(P)H, via FMN and iron-sulfur (Fe-S) centers, to quinones in the respiratory chain. The immediate electron acceptor for the enzyme in this species is believed to be plastoquinone. Couples the redox reaction to proton translocation (for every two electrons transferred, four hydrogen ions are translocated across the cytoplasmic membrane), and thus conserves the redox energy in a proton gradient. This is NAD(P)H-quinone oxidoreductase chain 4 from Prochlorococcus marinus (strain MIT 9215).